A 206-amino-acid polypeptide reads, in one-letter code: AT-hook motif nuclear-localized protein 28 (206 aa).

Disordered stretches follow at residues 1 to 21 (METV…PKAP) and 160 to 206 (TEEE…PSPY). The segment at residues 5 to 17 (GRPRGRPRGSKNK) is a DNA-binding region (a.T hook). Residues 7 to 18 (PRGRPRGSKNKP) are compositionally biased toward basic residues. One can recognise a PPC domain in the interval 27–173 (DPPMSPYILE…QRNSAEGEEE (147 aa)).

It localises to the nucleus. Functionally, transcription factor that specifically binds AT-rich DNA sequences related to the nuclear matrix attachment regions (MARs). This is AT-hook motif nuclear-localized protein 28 from Arabidopsis thaliana (Mouse-ear cress).